Reading from the N-terminus, the 290-residue chain is Probable ECF RNA polymerase sigma factor SigI (290 aa).

Residues 11–74 (WRAHRAYLVD…LCLDHIKSAS (64 aa)) are sigma-70 factor domain-2. Positions 34–37 (DMVQ) match the Polymerase core binding motif. The tract at residues 110–162 (LALLIMLERLGPAERVVFVLHEIFGLPYQQIATTIGSQASTCRQLAHRARRKI) is sigma-70 factor domain-4_2. The segment at residues 137–156 (YQQIATTIGSQASTCRQLAH) is a DNA-binding region (H-T-H motif).

It belongs to the sigma-70 factor family. ECF subfamily. As to quaternary structure, interacts transiently with the RNA polymerase catalytic core formed by RpoA, RpoB, RpoC and RpoZ (2 alpha, 1 beta, 1 beta' and 1 omega subunit) to form the RNA polymerase holoenzyme that can initiate transcription.

Its function is as follows. Sigma factors are initiation factors that promote the attachment of RNA polymerase to specific initiation sites and are then released. Extracytoplasmic function (ECF) sigma factors are held in an inactive form by a cognate anti-sigma factor until released, although no anti-sigma factor is known for this protein. The polypeptide is Probable ECF RNA polymerase sigma factor SigI (sigI) (Mycobacterium tuberculosis (strain CDC 1551 / Oshkosh)).